The primary structure comprises 122 residues: Photosystem II extrinsic protein U (122 aa).

A signal peptide spans 1–26 (MKTIVRLFAILMVLISSVGFVGSAVA).

This sequence belongs to the PsbU family. PSII is composed of 1 copy each of membrane proteins PsbA, PsbB, PsbC, PsbD, PsbE, PsbF, PsbH, PsbI, PsbJ, PsbK, PsbL, PsbM, PsbT, PsbX, PsbY, PsbZ, Psb30/Ycf12, peripheral proteins PsbO, CyanoQ (PsbQ), PsbU, PsbV and a large number of cofactors. It forms dimeric complexes.

It is found in the cellular thylakoid membrane. Its function is as follows. One of the extrinsic, lumenal subunits of photosystem II (PSII). PSII is a light-driven water plastoquinone oxidoreductase, using light energy to abstract electrons from H(2)O, generating a proton gradient subsequently used for ATP formation. The extrinsic proteins stabilize the structure of photosystem II oxygen-evolving complex (OEC), the ion environment of oxygen evolution and protect the OEC against heat-induced inactivation. This is Photosystem II extrinsic protein U from Crocosphaera subtropica (strain ATCC 51142 / BH68) (Cyanothece sp. (strain ATCC 51142)).